Reading from the N-terminus, the 420-residue chain is Argininosuccinate synthase (420 aa).

Residues 9–17 (AYSGGLDTS) and alanine 35 contribute to the ATP site. Tyrosine 86 and serine 91 together coordinate L-citrulline. 114–122 (SHGCTGKGN) is a binding site for ATP. L-aspartate is bound by residues threonine 118, asparagine 122, and aspartate 123. Asparagine 122 lines the L-citrulline pocket. Positions 126, 179, 188, 273, and 285 each coordinate L-citrulline.

Belongs to the argininosuccinate synthase family. Type 1 subfamily. Homotetramer.

It localises to the cytoplasm. It carries out the reaction L-citrulline + L-aspartate + ATP = 2-(N(omega)-L-arginino)succinate + AMP + diphosphate + H(+). It participates in amino-acid biosynthesis; L-arginine biosynthesis; L-arginine from L-ornithine and carbamoyl phosphate: step 2/3. Catalyzes the eighth step in arginine biosynthesis. Also has a catabolic function as the first enzyme of citrulline utilization as nitrogen source via arginine and the reactions involved in the arginase pathway. This chain is Argininosuccinate synthase (ARG1), found in Saccharomyces cerevisiae (strain ATCC 204508 / S288c) (Baker's yeast).